Consider the following 398-residue polypeptide: Phosphoglycerate kinase (398 aa).

Substrate-binding positions include 23 to 25 (DFN), R38, 61 to 64 (HMGK), R122, and R155. Residues K206, G297, E328, and 354-357 (GGDS) each bind ATP.

This sequence belongs to the phosphoglycerate kinase family. Monomer.

The protein localises to the cytoplasm. The catalysed reaction is (2R)-3-phosphoglycerate + ATP = (2R)-3-phospho-glyceroyl phosphate + ADP. It functions in the pathway carbohydrate degradation; glycolysis; pyruvate from D-glyceraldehyde 3-phosphate: step 2/5. The chain is Phosphoglycerate kinase from Clostridium botulinum (strain Okra / Type B1).